Here is a 67-residue protein sequence, read N- to C-terminus: MMSKLGVLLTICLLLFPLTAVSLDGDQPADLPELRAQDFAPERSPWFDPVRRCCSQDCRVCIPCCPY.

A signal peptide spans 1–22; it reads MMSKLGVLLTICLLLFPLTAVS. Positions 23–50 are excised as a propeptide; sequence LDGDQPADLPELRAQDFAPERSPWFDPV. Disulfide bonds link Cys-53–Cys-65, Cys-54–Cys-61, and Cys-58–Cys-64. Residue Pro-63 is modified to 4-hydroxyproline.

Belongs to the conotoxin M superfamily. Expressed by the venom duct.

Its subcellular location is the secreted. This chain is Conotoxin TsMMSK-B022, found in Conus tessulatus (Tessellate cone).